A 285-amino-acid polypeptide reads, in one-letter code: Nucleotide-binding protein CD630_34000 (285 aa).

8–15 is a binding site for ATP; that stretch reads GLSGSGKS. 59 to 62 provides a ligand contact to GTP; the sequence is DIRG.

Belongs to the RapZ-like family.

Displays ATPase and GTPase activities. The sequence is that of Nucleotide-binding protein CD630_34000 from Clostridioides difficile (strain 630) (Peptoclostridium difficile).